The sequence spans 291 residues: MGVAHSDLHNDLSSSSCFGDRNILKPGLGDLPEACVAIIVENLDPVEICRFSKLNRAFRGASWADCVWESKLPQNYRDVLEKILGGFPENLQKRHLYAFLSRINSFDDATKKVWIDKRTSGVCLSISAKGLSITGIDDRRYWSHIPTDESRFSSVAYLQQIWWFEVDGEIDFPFPVGTYSIFFRLQLGRSGKWFGRRVCNTEQVHGWDIKPVRFQLWTEDGQYSSSQCMLTERGNWIHYHAGDVVVRESNRSSTKIKFSMTQIDCTHTKGGLSLDSVVVYPSSCKDQLKRF.

The 47-residue stretch at 25–71 (KPGLGDLPEACVAIIVENLDPVEICRFSKLNRAFRGASWADCVWESK) folds into the F-box domain.

The sequence is that of F-box protein PP2-A12 (P2A12) from Arabidopsis thaliana (Mouse-ear cress).